We begin with the raw amino-acid sequence, 322 residues long: Transcription factor IIIA (322 aa).

9 consecutive C2H2-type zinc fingers follow at residues 12-36 (FVCS…YCKH), 42-64 (FACD…NLSH), 70-95 (YQCL…ERVH), 102-126 (YVCD…KCEH), 132-156 (FECQ…EKVH), 159-184 (YPCA…KAAH), 188-211 (LQCD…LFVH), 218-243 (FKCT…LSFH), and 249-273 (FICP…AVVH). Residues 272-322 (VHDPQKKKLQKKTKRGRKKKLEPKTNVSDDSELPAQLHGLSLNTSTSQNNP) are disordered. Residues 278 to 292 (KKLQKKTKRGRKKKL) are compositionally biased toward basic residues. Residues 312-322 (SLNTSTSQNNP) show a composition bias toward polar residues.

It localises to the nucleus. Involved in ribosomal large subunit biogenesis. Interacts with the internal control region (ICR) of approximately 50 bases within the 5S RNA genes, is required for correct transcription of these genes by RNA polymerase III. Also binds the transcribed 5S RNA's. The chain is Transcription factor IIIA (gtf3a) from Ictalurus punctatus (Channel catfish).